The following is a 418-amino-acid chain: Fumarylacetoacetase (418 aa).

Residue Asp127 participates in Ca(2+) binding. His134 acts as the Proton acceptor in catalysis. Residues Glu200, Glu202, and Asp235 each contribute to the Ca(2+) site. Asp235, Lys255, and Thr259 together coordinate Mg(2+).

Belongs to the FAH family. Ca(2+) serves as cofactor. Mg(2+) is required as a cofactor. As to expression, highly expressed in the intestine and the hypodermis.

The enzyme catalyses 4-fumarylacetoacetate + H2O = acetoacetate + fumarate + H(+). The protein operates within amino-acid degradation; L-phenylalanine degradation; acetoacetate and fumarate from L-phenylalanine: step 6/6. In terms of biological role, fumarylacetoacetase involved in the tyrosine degradation pathway. The chain is Fumarylacetoacetase from Caenorhabditis elegans.